Reading from the N-terminus, the 467-residue chain is MATRSCREKAQKLNEQHQLILSKLLREEDNKYCADCEAKGPRWASWNIGVFICIRCAGIHRNLGVHISRVKSVNLDQWTAEQIQCMQDMGNTKARLLYEANLPENFRRPQTDQAVEFFIRDKYEKKKYYDKNAIAITNISSSDAPLQPLVSSPSLQAAVDKNKLEKEKEKKKEEKKREKEPEKPAKPLTAEKLQKKDQQLEPKKSTSPKKAAEPTVDLLGLDGPAVAPVTNGNTTVPPLNDDLDIFGPMISNPLPATVMPPAQGTPSAPAAATLSTVTSGDLDLFTEQTTKSEEVAKKQLSKDSILSLYGTGTIQQQSTPGVFMGPTNIPFTSQAPAAFQGFPSMGVPVPAAPGLIGNVMGQSPSMMVGMPMPNGFMGNAQTGVMPLPQNVVGPQGGMVGQMGAPQSKFGLPQAQQPQWSLSQMNQQMAGMSISSATPTAGFGQPSSTTAGWSGSSSGQTLSTQLWK.

Residues 18–136 enclose the Arf-GAP domain; the sequence is QLILSKLLRE…KYYDKNAIAI (119 aa). Residues 33 to 56 form a C4-type zinc finger; sequence CADCEAKGPRWASWNIGVFICIRC. Residues 145–155 show a composition bias toward polar residues; it reads PLQPLVSSPSL. Disordered regions lie at residues 145–224 and 408–467; these read PLQP…LDGP and KFGL…QLWK. 2 stretches are compositionally biased toward basic and acidic residues: residues 160–185 and 192–204; these read DKNK…EKPA and KLQK…EPKK. The Interaction with clathrin heavy chains motif lies at 218-222; the sequence is LLGLD. A compositionally biased stretch (polar residues) spans 413–438; that stretch reads QAQQPQWSLSQMNQQMAGMSISSATP. Low complexity predominate over residues 446-467; sequence SSTTAGWSGSSSGQTLSTQLWK.

As to quaternary structure, interacts with ARF6. Interacts with clathrin heavy chains via the clathrin box-like motif. Detected in bone marrow, adrenal gland, trachea, lymph node, spinal cord, peripheral blood leukocytes, thyroid and stomach.

The protein resides in the cell membrane. Functionally, GTPase activating protein that acts on ARF6. Plays a role in clathrin-dependent endocytosis. May play a role in erythropoiesis. This Homo sapiens (Human) protein is Stromal membrane-associated protein 1 (SMAP1).